Reading from the N-terminus, the 240-residue chain is Aquaporin Z (240 aa).

2 helical membrane passes run 10 to 30 (AIGTFWLTFAGCGSAVIAAGF) and 35 to 55 (IGLVGVSLAFGLSVVTMAYAI). Positions 64–66 (NPA) match the NPA 1 motif. A run of 3 helical transmembrane segments spans residues 82 to 102 (ILPYVIAQVCGAIVAAELLYI), 131 to 151 (MMACFLTEVVMTMMFLFIIMG), and 160 to 180 (GFAPLAIGLALVMIHLVSIPV). Residues 186 to 188 (NPA) carry the NPA 2 motif. The helical transmembrane segment at 194-214 (ALFVGGWAMAQLWLFWVAPLI) threads the bilayer.

The protein belongs to the MIP/aquaporin (TC 1.A.8) family. Homotetramer.

It is found in the cell inner membrane. The enzyme catalyses H2O(in) = H2O(out). Channel that permits osmotically driven movement of water in both directions. It is involved in the osmoregulation and in the maintenance of cell turgor during volume expansion in rapidly growing cells. It mediates rapid entry or exit of water in response to abrupt changes in osmolarity. In Bradyrhizobium diazoefficiens (strain JCM 10833 / BCRC 13528 / IAM 13628 / NBRC 14792 / USDA 110), this protein is Aquaporin Z.